The primary structure comprises 65 residues: Large ribosomal subunit protein bL35 (65 aa).

Composition is skewed to basic residues over residues 1–11 (MPKIKTRRSAA) and 21–43 (KFKRRRQNLRHILTKKAASRKMR). Residues 1 to 65 (MPKIKTRRSA…KAVRRMLPNG (65 aa)) form a disordered region.

Belongs to the bacterial ribosomal protein bL35 family.

In Desulfovibrio desulfuricans (strain ATCC 27774 / DSM 6949 / MB), this protein is Large ribosomal subunit protein bL35.